Reading from the N-terminus, the 503-residue chain is Cytochrome P450 6l1 (503 aa).

C438 contacts heme.

Belongs to the cytochrome P450 family. Heme serves as cofactor. As to expression, detected only in testes and accessory glands of male adults.

The protein resides in the endoplasmic reticulum membrane. It localises to the microsome membrane. The polypeptide is Cytochrome P450 6l1 (CYP6L1) (Blattella germanica (German cockroach)).